The sequence spans 739 residues: Bifunctional (p)ppGpp synthase/hydrolase RelA (739 aa).

Positions 50–149 (YIVHPIQVAG…VKLADRLHNM (100 aa)) constitute an HD domain. Mn(2+) is bound by residues H53 and H77. Catalysis depends on nucleophile, for hydrolase activity residues E81 and D82. Mn(2+) is bound at residue D144. D264 contacts Mg(2+). Residues 393–454 (ERIYVFTPTG…KTGDVVEIVT (62 aa)) form the TGS domain. An ACT domain is found at 664 to 739 (EIDIYGLNRR…DVYSVKRTNG (76 aa)).

This sequence belongs to the RelA/SpoT family. Mg(2+) serves as cofactor. Requires Mn(2+) as cofactor.

The catalysed reaction is GTP + ATP = guanosine 3'-diphosphate 5'-triphosphate + AMP. The enzyme catalyses guanosine 3',5'-bis(diphosphate) + H2O = GDP + diphosphate + H(+). It functions in the pathway purine metabolism; ppGpp biosynthesis; ppGpp from GDP: step 1/1. It participates in purine metabolism; ppGpp biosynthesis; ppGpp from GTP: step 1/2. Its activity is regulated as follows. Alpha-beta methylenyl ATP, an ATP-analog inhibitor of the synthase activity also reduces the hydrolase activity about 4-fold. Functionally, in eubacteria ppGpp (guanosine 3'-diphosphate 5'-diphosphate) is a mediator of the stringent response that coordinates a variety of cellular activities in response to changes in nutritional abundance. This enzyme catalyzes both the formation of pppGpp which is then hydrolyzed to form ppGpp, and the hydrolysis of ppGpp. The enzyme does not simultaneously display both synthase and hydrolase activities. In the structure of residues 1-385 there are 2 conformations seen, the hydrolase-OFF/synthase-ON and hydrolase-ON/synthase-OFF, suggesting there is ligand-induced signal transmission between the 2 active sites. The sequence is that of Bifunctional (p)ppGpp synthase/hydrolase RelA (relA) from Streptococcus dysgalactiae subsp. equisimilis (Streptococcus equisimilis).